The following is a 130-amino-acid chain: Albumin-1 A (130 aa).

An N-terminal signal peptide occupies residues 1–26 (MASVKLASLIVLFATLGMFLTKNVGA). 3 cysteine pairs are disulfide-bonded: Cys29-Cys46, Cys33-Cys48, and Cys41-Cys58. Propeptides lie at residues 64–69 (VFLRTN) and 123–130 (LLKSVSTA).

Post-translationally, the C-terminal glycine may be removed from PA1b. Major component of both the cotyledons and embryonic axes of mature seeds.

Its function is as follows. PA1b binds to basic 7S globulin (BG) and stimulates its phosphorylation activity. Involved in the signal transduction system to regulate the growth and differentiation as a hormone peptide. Toxic to various insects through binding to a high affinity binding site in the insect gut. The protein is Albumin-1 A of Pisum sativum (Garden pea).